The primary structure comprises 171 residues: Cytochrome c oxidase subunit 5b-2, mitochondrial (171 aa).

The N-terminal 54 residues, 1 to 54 (MWRRIVSSHLKSISAVGSCAAPSCRHAVVESTHLSLSTRASSIPAYSSIFSRLI), are a transit peptide targeting the mitochondrion. Residues Cys-121, Cys-145, and Cys-148 each contribute to the Zn(2+) site.

Belongs to the cytochrome c oxidase subunit 5B (TC 3.D.4.11) family.

It is found in the mitochondrion inner membrane. This protein is one of the nuclear-coded polypeptide chains of cytochrome c oxidase, the terminal oxidase in mitochondrial electron transport. The protein is Cytochrome c oxidase subunit 5b-2, mitochondrial (COX5B-2) of Arabidopsis thaliana (Mouse-ear cress).